The sequence spans 349 residues: GDSL esterase/lipase At2g19060 (349 aa).

Residues 1 to 25 (MADKMFKALLWAFATAVVMAEAVRG) form the signal peptide. The active-site Nucleophile is S37. The N-linked (GlcNAc...) asparagine glycan is linked to N178. Residues D317 and H320 contribute to the active site.

Belongs to the 'GDSL' lipolytic enzyme family.

The protein resides in the secreted. This Arabidopsis thaliana (Mouse-ear cress) protein is GDSL esterase/lipase At2g19060.